Consider the following 192-residue polypeptide: Elongation factor P (192 aa).

Belongs to the elongation factor P family.

The protein localises to the cytoplasm. It functions in the pathway protein biosynthesis; polypeptide chain elongation. Involved in peptide bond synthesis. Stimulates efficient translation and peptide-bond synthesis on native or reconstituted 70S ribosomes in vitro. Probably functions indirectly by altering the affinity of the ribosome for aminoacyl-tRNA, thus increasing their reactivity as acceptors for peptidyl transferase. The protein is Elongation factor P of Borrelia recurrentis (strain A1).